Here is a 62-residue protein sequence, read N- to C-terminus: UPF0434 protein Smed_3047 (62 aa).

This sequence belongs to the UPF0434 family.

The sequence is that of UPF0434 protein Smed_3047 from Sinorhizobium medicae (strain WSM419) (Ensifer medicae).